The following is a 204-amino-acid chain: Urease accessory protein UreG (204 aa).

13–20 (GPVGSGKT) is a binding site for GTP.

This sequence belongs to the SIMIBI class G3E GTPase family. UreG subfamily. As to quaternary structure, homodimer. UreD, UreF and UreG form a complex that acts as a GTP-hydrolysis-dependent molecular chaperone, activating the urease apoprotein by helping to assemble the nickel containing metallocenter of UreC. The UreE protein probably delivers the nickel.

The protein resides in the cytoplasm. Facilitates the functional incorporation of the urease nickel metallocenter. This process requires GTP hydrolysis, probably effectuated by UreG. This Acinetobacter baumannii (strain AB307-0294) protein is Urease accessory protein UreG.